Here is a 28-residue protein sequence, read N- to C-terminus: Putative antitoxin AF_1079 (28 aa).

Belongs to the UPF0165 family.

In terms of biological role, possibly the antitoxin component of a type II toxin-antitoxin (TA) system. The sequence is that of Putative antitoxin AF_1079 from Archaeoglobus fulgidus (strain ATCC 49558 / DSM 4304 / JCM 9628 / NBRC 100126 / VC-16).